The primary structure comprises 133 residues: Glycine cleavage system H protein (133 aa).

In terms of domain architecture, Lipoyl-binding spans 30 to 112 (TITVGITHHA…YGAGWFFKIK (83 aa)). The residue at position 71 (K71) is an N6-lipoyllysine.

Belongs to the GcvH family. As to quaternary structure, the glycine cleavage system is composed of four proteins: P, T, L and H. It depends on (R)-lipoate as a cofactor.

Functionally, the glycine cleavage system catalyzes the degradation of glycine. The H protein shuttles the methylamine group of glycine from the P protein to the T protein. The sequence is that of Glycine cleavage system H protein from Neisseria gonorrhoeae (strain ATCC 700825 / FA 1090).